The primary structure comprises 545 residues: Threonine--tRNA ligase catalytic subunit (545 aa).

The segment at 139 to 433 is catalytic; it reads DHRLIGEKLD…LLEHFKGKLP (295 aa). Residues Cys-231, His-282, and His-410 each coordinate Zn(2+).

Belongs to the class-II aminoacyl-tRNA synthetase family. As to quaternary structure, homodimer. Probably interacts with its editing subunit. The cofactor is Zn(2+).

It localises to the cytoplasm. The catalysed reaction is tRNA(Thr) + L-threonine + ATP = L-threonyl-tRNA(Thr) + AMP + diphosphate + H(+). Catalyzes the attachment of threonine to tRNA(Thr) in a two-step reaction: L-threonine is first activated by ATP to form Thr-AMP and then transferred to the acceptor end of tRNA(Thr). Also activates L-serine and transfers it to tRNA(Thr) but cannot deacylate incorrectly charged amino acid; unlike most archaea the editing function is found in a freestanding protein. The polypeptide is Threonine--tRNA ligase catalytic subunit (Saccharolobus islandicus (strain M.16.4 / Kamchatka #3) (Sulfolobus islandicus)).